The chain runs to 307 residues: O-acetylserine dependent cystathionine beta-synthase (307 aa).

The residue at position 44 (K44) is an N6-(pyridoxal phosphate)lysine. Pyridoxal 5'-phosphate-binding positions include N74, 178-182 (GSGGT), and S265.

The protein belongs to the cysteine synthase/cystathionine beta-synthase family. Pyridoxal 5'-phosphate is required as a cofactor.

The enzyme catalyses O-acetyl-L-serine + L-homocysteine = L,L-cystathionine + acetate + H(+). In terms of biological role, catalyzes the conversion of O-acetylserine and homocysteine to cystathionine. In Bacillus subtilis (strain 168), this protein is O-acetylserine dependent cystathionine beta-synthase (mccA).